The sequence spans 578 residues: Frizzled-2 (578 aa).

An N-terminal signal peptide occupies residues 1–17 (MLLRISVLFLLLGSCGA). At 18-236 (LFGKRQKCEQ…AESHSLVSNW (219 aa)) the chain is on the extracellular side. In terms of domain architecture, FZ spans 20–144 (GKRQKCEQIT…MSTGNICAAP (125 aa)). 5 disulfides stabilise this stretch: Cys-25/Cys-86, Cys-33/Cys-79, Cys-70/Cys-108, Cys-97/Cys-141, and Cys-101/Cys-125. Asn-39 carries an N-linked (GlcNAc...) asparagine glycan. The disordered stretch occupies residues 138–175 (GNICAAPPDTPKKQHKGHHHKNQNQNQNQNHNYSPDGP). The span at 150 to 159 (KQHKGHHHKN) shows a compositional bias: basic residues. The span at 160 to 169 (QNQNQNQNHN) shows a compositional bias: low complexity. Residue Asn-213 is glycosylated (N-linked (GlcNAc...) asparagine). Residues 237-257 (MAFWSITCCVLASFTFLTFLI) form a helical membrane-spanning segment. The Cytoplasmic segment spans residues 258–268 (ETDRFQYPERP). A helical transmembrane segment spans residues 269 to 289 (IFMLAFCQLMVAVGFMIRYFV). Residues 290–312 (GHEEIACDSMRIKGADDNSGSLC) are Extracellular-facing. A helical membrane pass occupies residues 313–333 (FVVFLLTYFFGMAASVWWVIL). Residues 334–354 (SLTWVLSAASKWSPEAISSFS) lie on the Cytoplasmic side of the membrane. A helical membrane pass occupies residues 355–375 (FHFHVVGWCLPAIQTVLVIVF). The Extracellular segment spans residues 376 to 398 (NAIDGDPITGICYVGNTDLQFQR). A helical transmembrane segment spans residues 399-419 (IFVLFPLLVYFIVGVLFLVIG). Residues 420-449 (FCNLWSIRNEVQKQHPSLESAHKITQLMSK) are Cytoplasmic-facing. A helical transmembrane segment spans residues 450–470 (IGIFSLLYTIPSLLIICVLFY). Over 471–497 (EQNHRSLWEQSQLCSCSPKQTIGDSSL) the chain is Extracellular. The helical transmembrane segment at 498-518 (IISLIKTCCMCILGWTSGFWV) threads the bilayer. Residues 519–578 (CSTKTLSSWKNAICCLGSSRSLPKYQPADILYAKSDMSSSQFYNTSLRHNHLYGGIPDKL) are Cytoplasmic-facing. Positions 522-527 (KTLSSW) match the Lys-Thr-X-X-X-Trp motif, mediates interaction with the PDZ domain of Dvl family members motif. Residues 556–558 (SSS) carry the PDZ-binding motif.

This sequence belongs to the G-protein coupled receptor Fz/Smo family. Expressed in two pairs of head neurons and throughout the pharynx.

It is found in the cell membrane. Receptor for Wnt proteins. Most frizzled receptors are coupled to the beta-catenin canonical signaling pathway, which leads to the activation of disheveled proteins, inhibition of gsk-3 kinase, nuclear accumulation of beta-catenin and activation of Wnt target genes. A second signaling pathway involving PKC and calcium fluxes has been seen for some family members, but it is not yet clear if it represents a distinct pathway or if it can be integrated in the canonical pathway, as PKC seems to be required for Wnt-mediated inactivation of gsk-3 kinase. Both pathways seem to involve interactions with G-proteins. Required for the migration and axon formation and guidance of different neuronal cell types including canal-associated neurons (CAN), hermaphrodite-specific neurons (HSN), anterior lateral microtubule neurons (ALM), and the right Q neuroblast (QR) and its descendants. Directs ALM migration through frizzled protein mom-5 and Wnt ligands cwn-1, cwn-2 and egl-20. May act redundantly with mom-5 to direct CAN migration. Plays a role in the organization of head ganglion cells. Probably by acting as a receptor for Wnt ligand cwn-2, plays a role in the positioning of the nerve ring and may in addition positively regulate the neurite outgrowth of RME GABAergic motor neurons along the anterior-posterior axis of the body. This is Frizzled-2 from Caenorhabditis elegans.